A 70-amino-acid chain; its full sequence is UPF0352 protein PSHAa1818 (70 aa).

It belongs to the UPF0352 family.

The polypeptide is UPF0352 protein PSHAa1818 (Pseudoalteromonas translucida (strain TAC 125)).